The following is a 277-amino-acid chain: Coiled-coil domain-containing protein 117 (277 aa).

The interval 22–69 (SPPAFAGRAFPPGAAGHDLAPRPGVRGPPSSPDGRTARGRVSIHCRKK) is disordered. Positions 23–55 (PPAFAGRAFPPGAAGHDLAPRPGVRGPPSSPDG) are enriched in low complexity. Residue Arg47 is modified to Omega-N-methylarginine. A Phosphoserine modification is found at Ser52. Over residues 58 to 69 (ARGRVSIHCRKK) the composition is skewed to basic residues. The stretch at 139-166 (QCEVARRRLQEIEDRIIDEDEEVESDRN) forms a coiled coil. Disordered stretches follow at residues 216–242 (LSEK…ATGT) and 255–277 (QCTD…EMEL). Residues 225-242 (NPKNYMGESQTKHTATGT) are compositionally biased toward polar residues.

In terms of assembly, interacts with CIAO2B; the interaction is direct. Interacts with MMS19; the interaction is indirect.

The protein resides in the cytoplasm. The protein localises to the cytoskeleton. It is found in the spindle. Its subcellular location is the nucleus. Functionally, facilitates DNA repair, cell cycle progression, and cell proliferation through its interaction with CIAO2B. This is Coiled-coil domain-containing protein 117 from Rattus norvegicus (Rat).